A 269-amino-acid polypeptide reads, in one-letter code: Undecaprenyl-diphosphatase (269 aa).

8 helical membrane-spanning segments follow: residues 1 to 21 (MSIF…FLPI), 39 to 59 (LPIL…CTVF), 86 to 106 (LMMI…GLLL), 112 to 132 (TIDI…LIAS), 144 to 164 (VTLL…IPGI), 184 to 204 (AGEF…ILEI), 210 to 230 (LLAG…FVVG), and 249 to 269 (FAFY…GFAG).

This sequence belongs to the UppP family.

The protein localises to the cell inner membrane. The catalysed reaction is di-trans,octa-cis-undecaprenyl diphosphate + H2O = di-trans,octa-cis-undecaprenyl phosphate + phosphate + H(+). Its function is as follows. Catalyzes the dephosphorylation of undecaprenyl diphosphate (UPP). Confers resistance to bacitracin. The polypeptide is Undecaprenyl-diphosphatase (Treponema denticola (strain ATCC 35405 / DSM 14222 / CIP 103919 / JCM 8153 / KCTC 15104)).